Here is a 205-residue protein sequence, read N- to C-terminus: Large ribosomal subunit protein bL21m (205 aa).

The transit peptide at 1–39 (MAASSLTVTLGRLASACSHSILRPSGPGAASLWSASRRF) directs the protein to the mitochondrion.

This sequence belongs to the bacterial ribosomal protein bL21 family. Component of the mitochondrial large ribosomal subunit (mt-LSU). Mature mammalian 55S mitochondrial ribosomes consist of a small (28S) and a large (39S) subunit. The 28S small subunit contains a 12S ribosomal RNA (12S mt-rRNA) and 30 different proteins. The 39S large subunit contains a 16S rRNA (16S mt-rRNA), a copy of mitochondrial valine transfer RNA (mt-tRNA(Val)), which plays an integral structural role, and 52 different proteins.

It localises to the mitochondrion. This Homo sapiens (Human) protein is Large ribosomal subunit protein bL21m (MRPL21).